The chain runs to 79 residues: Cytochrome b-c1 complex subunit 10 (79 aa).

Residues 1 to 23 (MISFFPNKPMYHVQPHISFITPE) are Mitochondrial matrix-facing. Residues 24 to 47 (RTMKTIPAFSRWAFAAVAGVFVFA) traverse the membrane as a helical segment. The Mitochondrial intermembrane segment spans residues 48–79 (MQVPKVKTTILQPIAFIGDHFKDKTPEEDKWL).

This sequence belongs to the UQCR11/QCR10 family. As to quaternary structure, component of the ubiquinol-cytochrome c oxidoreductase (cytochrome b-c1 complex, complex III, CIII), a multisubunit enzyme composed of 3 respiratory subunits cytochrome b, cytochrome c1 and Rieske protein, 2 core protein subunits, and additional low-molecular weight protein subunits. The complex exists as an obligatory dimer and forms supercomplexes (SCs) in the inner mitochondrial membrane with cytochrome c oxidase (complex IV, CIV).

It localises to the mitochondrion inner membrane. Its function is as follows. Component of the ubiquinol-cytochrome c oxidoreductase, a multisubunit transmembrane complex that is part of the mitochondrial electron transport chain which drives oxidative phosphorylation. The respiratory chain contains 3 multisubunit complexes succinate dehydrogenase (complex II, CII), ubiquinol-cytochrome c oxidoreductase (cytochrome b-c1 complex, complex III, CIII) and cytochrome c oxidase (complex IV, CIV), that cooperate to transfer electrons derived from NADH and succinate to molecular oxygen, creating an electrochemical gradient over the inner membrane that drives transmembrane transport and the ATP synthase. The cytochrome b-c1 complex catalyzes electron transfer from ubiquinol to cytochrome c, linking this redox reaction to translocation of protons across the mitochondrial inner membrane, with protons being carried across the membrane as hydrogens on the quinol. In the process called Q cycle, 2 protons are consumed from the matrix, 4 protons are released into the intermembrane space and 2 electrons are passed to cytochrome c. QCR10 has a role in CIII assembly and RIP1 stability. This Schizosaccharomyces pombe (strain 972 / ATCC 24843) (Fission yeast) protein is Cytochrome b-c1 complex subunit 10.